A 91-amino-acid chain; its full sequence is Small ribosomal subunit protein uS19 (91 aa).

The protein belongs to the universal ribosomal protein uS19 family.

Its function is as follows. Protein S19 forms a complex with S13 that binds strongly to the 16S ribosomal RNA. In Shouchella clausii (strain KSM-K16) (Alkalihalobacillus clausii), this protein is Small ribosomal subunit protein uS19.